The sequence spans 233 residues: 2-C-methyl-D-erythritol 4-phosphate cytidylyltransferase (233 aa).

The protein belongs to the IspD/TarI cytidylyltransferase family. IspD subfamily.

It carries out the reaction 2-C-methyl-D-erythritol 4-phosphate + CTP + H(+) = 4-CDP-2-C-methyl-D-erythritol + diphosphate. The protein operates within isoprenoid biosynthesis; isopentenyl diphosphate biosynthesis via DXP pathway; isopentenyl diphosphate from 1-deoxy-D-xylulose 5-phosphate: step 2/6. In terms of biological role, catalyzes the formation of 4-diphosphocytidyl-2-C-methyl-D-erythritol from CTP and 2-C-methyl-D-erythritol 4-phosphate (MEP). In Lachnoclostridium phytofermentans (strain ATCC 700394 / DSM 18823 / ISDg) (Clostridium phytofermentans), this protein is 2-C-methyl-D-erythritol 4-phosphate cytidylyltransferase.